Consider the following 184-residue polypeptide: Bifunctional protein PyrR (184 aa).

The PRPP-binding motif lies at 98–110 (VVLVDDVLYTGRT).

This sequence belongs to the purine/pyrimidine phosphoribosyltransferase family. PyrR subfamily.

It catalyses the reaction UMP + diphosphate = 5-phospho-alpha-D-ribose 1-diphosphate + uracil. In terms of biological role, regulates the transcription of the pyrimidine nucleotide (pyr) operon in response to exogenous pyrimidines. Its function is as follows. Also displays a weak uracil phosphoribosyltransferase activity which is not physiologically significant. In Roseiflexus castenholzii (strain DSM 13941 / HLO8), this protein is Bifunctional protein PyrR.